A 188-amino-acid polypeptide reads, in one-letter code: dCTP deaminase (188 aa).

DCTP contacts are provided by residues 111-116, 135-137, Gln156, Tyr170, and Gln180; these read KSTYAR and TLE. The active-site Proton donor/acceptor is Glu137.

This sequence belongs to the dCTP deaminase family. As to quaternary structure, homotrimer.

The catalysed reaction is dCTP + H2O + H(+) = dUTP + NH4(+). Its pathway is pyrimidine metabolism; dUMP biosynthesis; dUMP from dCTP (dUTP route): step 1/2. Functionally, catalyzes the deamination of dCTP to dUTP. This chain is dCTP deaminase, found in Ralstonia pickettii (strain 12J).